Here is a 663-residue protein sequence, read N- to C-terminus: DNA topoisomerase 4 subunit B (663 aa).

ATP contacts are provided by residues tyrosine 7, asparagine 47, aspartate 74, 114–120, and lysine 341; that span reads GLHGVGA. Residues 386–416 are disordered; it reads REAARKAREDARSGKKNKRKDTLLSGKLTPA. Basic and acidic residues predominate over residues 387–398; sequence EAARKAREDARS. Residues 424–538 form the Toprim domain; the sequence is NELYLVEGDS…AGRVFIALPP (115 aa). Mg(2+) is bound by residues glutamate 430, aspartate 503, and aspartate 505.

The protein belongs to the type II topoisomerase family. ParE type 2 subfamily. Heterotetramer composed of ParC and ParE. Mg(2+) serves as cofactor. The cofactor is Mn(2+). It depends on Ca(2+) as a cofactor.

It carries out the reaction ATP-dependent breakage, passage and rejoining of double-stranded DNA.. Functionally, topoisomerase IV is essential for chromosome segregation. It relaxes supercoiled DNA. Performs the decatenation events required during the replication of a circular DNA molecule. The protein is DNA topoisomerase 4 subunit B of Staphylococcus aureus (strain NCTC 8325 / PS 47).